The sequence spans 187 residues: Ribosome-recycling factor (187 aa).

The protein belongs to the RRF family.

The protein resides in the cytoplasm. Responsible for the release of ribosomes from messenger RNA at the termination of protein biosynthesis. May increase the efficiency of translation by recycling ribosomes from one round of translation to another. This Ruegeria sp. (strain TM1040) (Silicibacter sp.) protein is Ribosome-recycling factor.